The primary structure comprises 282 residues: uncharacterized protein (282 aa).

A helical transmembrane segment spans residues 22 to 42 (YLFTLGSFVTMFFVLCISPVF).

Its subcellular location is the cell membrane. This is an uncharacterized protein from Bacillus anthracis.